Reading from the N-terminus, the 91-residue chain is Sec-independent protein translocase protein TatA (91 aa).

A helical transmembrane segment spans residues 1 to 21; sequence MGAMSPWHWAIVALVVIILFG. The interval 44–91 is disordered; it reads KEMQNDNSTPAPTAQQSAPAELPVADTTTAPVTPPAPVQPQHTEPKSA. Over residues 51-74 the composition is skewed to low complexity; that stretch reads STPAPTAQQSAPAELPVADTTTAP.

Belongs to the TatA/E family. The Tat system comprises two distinct complexes: a TatABC complex, containing multiple copies of TatA, TatB and TatC subunits, and a separate TatA complex, containing only TatA subunits. Substrates initially bind to the TatABC complex, which probably triggers association of the separate TatA complex to form the active translocon.

The protein localises to the cell membrane. Its function is as follows. Part of the twin-arginine translocation (Tat) system that transports large folded proteins containing a characteristic twin-arginine motif in their signal peptide across membranes. TatA could form the protein-conducting channel of the Tat system. The protein is Sec-independent protein translocase protein TatA of Rhodococcus jostii (strain RHA1).